Consider the following 729-residue polypeptide: Fatty acid oxidation complex subunit alpha (729 aa).

Residues 1–189 (MLYKGDTLYL…KIGLVDGVVK (189 aa)) form an enoyl-CoA hydratase/isomerase region. D296 lines the substrate pocket. The tract at residues 311–729 (ETPKQAAVLG…ARPVGDLKTA (419 aa)) is 3-hydroxyacyl-CoA dehydrogenase. Residues M324, D343, 400–402 (VVE), K407, and S429 each bind NAD(+). H450 functions as the For 3-hydroxyacyl-CoA dehydrogenase activity in the catalytic mechanism. N453 contacts NAD(+). The substrate site is built by N500 and Y660. The segment at 708–729 (RHNEPYYPPVEPARPVGDLKTA) is disordered.

This sequence in the N-terminal section; belongs to the enoyl-CoA hydratase/isomerase family. In the C-terminal section; belongs to the 3-hydroxyacyl-CoA dehydrogenase family. In terms of assembly, heterotetramer of two alpha chains (FadB) and two beta chains (FadA).

It carries out the reaction a (3S)-3-hydroxyacyl-CoA + NAD(+) = a 3-oxoacyl-CoA + NADH + H(+). It catalyses the reaction a (3S)-3-hydroxyacyl-CoA = a (2E)-enoyl-CoA + H2O. The enzyme catalyses a 4-saturated-(3S)-3-hydroxyacyl-CoA = a (3E)-enoyl-CoA + H2O. The catalysed reaction is (3S)-3-hydroxybutanoyl-CoA = (3R)-3-hydroxybutanoyl-CoA. It carries out the reaction a (3Z)-enoyl-CoA = a 4-saturated (2E)-enoyl-CoA. It catalyses the reaction a (3E)-enoyl-CoA = a 4-saturated (2E)-enoyl-CoA. Its pathway is lipid metabolism; fatty acid beta-oxidation. Involved in the aerobic and anaerobic degradation of long-chain fatty acids via beta-oxidation cycle. Catalyzes the formation of 3-oxoacyl-CoA from enoyl-CoA via L-3-hydroxyacyl-CoA. It can also use D-3-hydroxyacyl-CoA and cis-3-enoyl-CoA as substrate. This is Fatty acid oxidation complex subunit alpha from Shigella flexneri serotype 5b (strain 8401).